Reading from the N-terminus, the 228-residue chain is UPF0758 protein str1465 (228 aa).

Positions 103 to 225 constitute an MPN domain; sequence QIMSSQQVAR…YYSFREERED (123 aa). Positions 174, 176, and 187 each coordinate Zn(2+). The short motif at 174-187 is the JAMM motif element; the sequence is HNHPSGEAYPSRND.

The protein belongs to the UPF0758 family.

This Streptococcus thermophilus (strain CNRZ 1066) protein is UPF0758 protein str1465.